The sequence spans 97 residues: Protein YukE (97 aa).

Positions 21-94 form a coiled coil; that stretch reads VESQEVLNQV…ESTDQDIANQ (74 aa).

It belongs to the WXG100 family. sagEsxA-like subfamily. As to quaternary structure, homodimer.

It is found in the secreted. Required to deliver LXG toxins to target cells. This Bacillus subtilis (strain 168) protein is Protein YukE (yukE).